The primary structure comprises 192 residues: BREX protein BrxB (192 aa).

It belongs to the BrxB family.

Functionally, BREX systems (bacteriophage exclusion) provide immunity against bacteriophage. Part of a type 1 BREX system. This system allows phage adsorption but prevents phage DNA replication, without degradation of the phage DNA. Methylation of bacterial DNA by PglX probably guides self/non-self discrimination. When the brxA-brxB-brxC-pglX and pglZ-brxL operons are transformed into a susceptible B.subtilis strain (BEST7003) they confer resistance to bacteriophages SPbeta, SP16, Zeta, phi3T and SP02 and partial protection to phages SP01 and SP82G (these include lytic and temperate phage). They do not protect against phages phi105, rho10 or rho14. Additionally confers a very slight reduction in efficiency of plasmid transformation. This chain is BREX protein BrxB, found in Bacillus cereus (strain H3081.97).